Here is a 248-residue protein sequence, read N- to C-terminus: PF03932 family protein CutC (248 aa).

The protein belongs to the CutC family. As to quaternary structure, homodimer.

It localises to the cytoplasm. This chain is PF03932 family protein CutC, found in Escherichia coli O7:K1 (strain IAI39 / ExPEC).